Here is a 264-residue protein sequence, read N- to C-terminus: [LysW]-aminoadipate/[LysW]-glutamate kinase (264 aa).

Substrate is bound by residues 35–36, Arg-62, and Asn-167; that span reads GG.

This sequence belongs to the acetylglutamate kinase family. LysZ subfamily.

Its subcellular location is the cytoplasm. It catalyses the reaction [amino-group carrier protein]-C-terminal-N-(1,4-dicarboxybutan-1-yl)-L-glutamine + ATP = [amino-group carrier protein]-C-terminal-N-(1-carboxy-5-phosphooxy-5-oxopentan-1-yl)-L-glutamine + ADP. The enzyme catalyses [amino-group carrier protein]-C-terminal-gamma-(L-glutamyl)-L-glutamate + ATP = [amino-group carrier protein]-C-terminal-gamma-(5-phospho-L-glutamyl)-L-glutamate + ADP. It participates in amino-acid biosynthesis; L-lysine biosynthesis via AAA pathway; L-lysine from L-alpha-aminoadipate (Thermus route): step 2/5. The protein operates within amino-acid biosynthesis; L-arginine biosynthesis. Its function is as follows. Involved in both the arginine and lysine biosynthetic pathways. Phosphorylates the LysW-bound precursors glutamate (for arginine biosynthesis), respectively alpha-aminoadipate (for lysine biosynthesis). This is [LysW]-aminoadipate/[LysW]-glutamate kinase from Saccharolobus islandicus (strain Y.N.15.51 / Yellowstone #2) (Sulfolobus islandicus).